The chain runs to 103 residues: UPF0298 protein LACR_0404 (103 aa).

Belongs to the UPF0298 family.

It localises to the cytoplasm. This chain is UPF0298 protein LACR_0404, found in Lactococcus lactis subsp. cremoris (strain SK11).